Consider the following 288-residue polypeptide: Ribosomal protein L11 methyltransferase (288 aa).

S-adenosyl-L-methionine is bound by residues Thr134, Gly157, Asp179, and Asn224.

The protein belongs to the methyltransferase superfamily. PrmA family.

The protein localises to the cytoplasm. It carries out the reaction L-lysyl-[protein] + 3 S-adenosyl-L-methionine = N(6),N(6),N(6)-trimethyl-L-lysyl-[protein] + 3 S-adenosyl-L-homocysteine + 3 H(+). In terms of biological role, methylates ribosomal protein L11. The protein is Ribosomal protein L11 methyltransferase of Caulobacter sp. (strain K31).